We begin with the raw amino-acid sequence, 206 residues long: uncharacterized protein (206 aa).

The first 18 residues, 1 to 18 (MKTYSLLLGLFISFGVLA), serve as a signal peptide directing secretion.

This is an uncharacterized protein from Haemophilus influenzae (strain ATCC 51907 / DSM 11121 / KW20 / Rd).